We begin with the raw amino-acid sequence, 305 residues long: 4-diphosphocytidyl-2-C-methyl-D-erythritol kinase (305 aa).

Residue Lys-18 is part of the active site. Pro-103–Ser-113 is a binding site for ATP. Asp-145 is a catalytic residue.

It belongs to the GHMP kinase family. IspE subfamily.

It carries out the reaction 4-CDP-2-C-methyl-D-erythritol + ATP = 4-CDP-2-C-methyl-D-erythritol 2-phosphate + ADP + H(+). The protein operates within isoprenoid biosynthesis; isopentenyl diphosphate biosynthesis via DXP pathway; isopentenyl diphosphate from 1-deoxy-D-xylulose 5-phosphate: step 3/6. Its function is as follows. Catalyzes the phosphorylation of the position 2 hydroxy group of 4-diphosphocytidyl-2C-methyl-D-erythritol. This chain is 4-diphosphocytidyl-2-C-methyl-D-erythritol kinase, found in Lawsonia intracellularis (strain PHE/MN1-00).